The chain runs to 218 residues: Ras-related protein Rab-4A (218 aa).

Positions 23, 24, 25, 26, 27, 28, 42, 44, and 45 each coordinate GTP. Ser-27 is a binding site for Mg(2+). Positions 44 to 49 (HTIGVE) match the Switch 1 motif. Mg(2+) contacts are provided by Thr-45 and Asp-68. The Switch 2 motif lies at 70–79 (AGQERFRSVT). Residue Gly-71 coordinates GTP. Gln-72 carries the post-translational modification 5-glutamyl serotonin. GTP contacts are provided by Asn-126, Lys-127, Asp-129, Ala-157, and Leu-158. The residue at position 190 (Ser-190) is a Phosphoserine. Ser-204 carries the phosphoserine; by CDK1 modification. 2 S-geranylgeranyl cysteine lipidation sites follow: Cys-216 and Cys-218. Cysteine methyl ester is present on Cys-218.

It belongs to the small GTPase superfamily. Rab family. In terms of assembly, interacts with SGSM1, SGSM2 and SGSM3. Interacts with RAB11FIP1, RABEP1, ZFYVE20 and RUFY1. Interacts (membrane-bound form) with NDRG1; the interaction involves NDRG1 in vesicular recycling of E-cadherin. Interacts (in GTP-bound form) with GRIPAP1 (via N-terminus). Interacts with RABEP1 and RBSN. Does not interact with HPS4. Interacts with RABEP2; this interaction may mediate VEGFR2 cell surface expression. The cofactor is Mg(2+). Post-translationally, serotonylation of Gln-72 by TGM2 during activation and aggregation of platelets leads to constitutive activation of GTPase activity. Phosphorylated by CDK1 kinase during mitosis.

Its subcellular location is the membrane. It localises to the cytoplasm. The protein resides in the early endosome membrane. It is found in the recycling endosome membrane. It catalyses the reaction GTP + H2O = GDP + phosphate + H(+). Its activity is regulated as follows. Regulated by guanine nucleotide exchange factors (GEFs) which promote the exchange of bound GDP for free GTP. Regulated by GTPase activating proteins (GAPs) which increase the GTP hydrolysis activity. Inhibited by GDP dissociation inhibitors (GDIs). Functionally, the small GTPases Rab are key regulators of intracellular membrane trafficking, from the formation of transport vesicles to their fusion with membranes. Rabs cycle between an inactive GDP-bound form and an active GTP-bound form that is able to recruit to membranes different sets of downstream effectors directly responsible for vesicle formation, movement, tethering and fusion. RAB4A is involved in protein transport. Also plays a role in vesicular traffic. Mediates VEGFR2 endosomal trafficking to enhance VEGFR2 signaling. Acts as a regulator of platelet alpha-granule release during activation and aggregation of platelets. The sequence is that of Ras-related protein Rab-4A from Rattus norvegicus (Rat).